The primary structure comprises 204 residues: Outer-membrane lipoprotein carrier protein (204 aa).

An N-terminal signal peptide occupies residues 1-21; that stretch reads MKKIAIVGALLTSFVASSVWA. A disordered region spans residues 169 to 204; that stretch reads QRSSYQLKSQQNGAIDASKFTFTPPQGVTVDDQRNK. The segment covering 171-181 has biased composition (polar residues); sequence SSYQLKSQQNG.

Belongs to the LolA family. As to quaternary structure, monomer.

The protein localises to the periplasm. In terms of biological role, participates in the translocation of lipoproteins from the inner membrane to the outer membrane. Only forms a complex with a lipoprotein if the residue after the N-terminal Cys is not an aspartate (The Asp acts as a targeting signal to indicate that the lipoprotein should stay in the inner membrane). This Enterobacter sp. (strain 638) protein is Outer-membrane lipoprotein carrier protein.